Reading from the N-terminus, the 315-residue chain is Diacylglycerol kinase (315 aa).

In terms of domain architecture, DAGKc spans 1–132; it reads MRKRARIIYN…VDIGKMNNRY (132 aa). Residues 10–14, Thr-41, 67–73, and Thr-94 each bind ATP; these read NPTSG and GDGTLNE. Mg(2+)-binding residues include Lys-213, Asp-216, and Tyr-218. The active-site Proton acceptor is Glu-273.

It belongs to the diacylglycerol/lipid kinase family. In terms of assembly, homodimer. It depends on Mg(2+) as a cofactor.

The enzyme catalyses a 1,2-diacyl-sn-glycerol + ATP = a 1,2-diacyl-sn-glycero-3-phosphate + ADP + H(+). Its function is as follows. Catalyzes the phosphorylation of diacylglycerol (DAG) into phosphatidic acid. Is a key enzyme involved in the production of lipoteichoic acid by reintroducing DAG formed from the breakdown of membrane phospholipids into the phosphatidylglycerol biosynthetic pathway. The polypeptide is Diacylglycerol kinase (dagK) (Staphylococcus aureus (strain bovine RF122 / ET3-1)).